The sequence spans 250 residues: Small ribosomal subunit protein uS2 (250 aa).

Belongs to the universal ribosomal protein uS2 family.

This Paraburkholderia phymatum (strain DSM 17167 / CIP 108236 / LMG 21445 / STM815) (Burkholderia phymatum) protein is Small ribosomal subunit protein uS2.